A 350-amino-acid chain; its full sequence is Chorismate synthase (350 aa).

2 residues coordinate NADP(+): arginine 39 and arginine 45. FMN-binding positions include 119–121 (RSS), 213–214 (QA), glycine 258, 273–277 (KPIPT), and arginine 299.

Belongs to the chorismate synthase family. In terms of assembly, homotetramer. Requires FMNH2 as cofactor.

It catalyses the reaction 5-O-(1-carboxyvinyl)-3-phosphoshikimate = chorismate + phosphate. It functions in the pathway metabolic intermediate biosynthesis; chorismate biosynthesis; chorismate from D-erythrose 4-phosphate and phosphoenolpyruvate: step 7/7. Functionally, catalyzes the anti-1,4-elimination of the C-3 phosphate and the C-6 proR hydrogen from 5-enolpyruvylshikimate-3-phosphate (EPSP) to yield chorismate, which is the branch point compound that serves as the starting substrate for the three terminal pathways of aromatic amino acid biosynthesis. This reaction introduces a second double bond into the aromatic ring system. The chain is Chorismate synthase from Thermoanaerobacter pseudethanolicus (strain ATCC 33223 / 39E) (Clostridium thermohydrosulfuricum).